A 393-amino-acid chain; its full sequence is MLISLSQWLQLLYPEQLGFLRVFQYLTFRAVMAAMTALLIGLALGPIVIRRLTELKIGQPIREYGVAEHMVKQGTPTMGGALILLAIAISTLLWFDWSNRFVWIVMIVTFGFGAIGWVDDWRKVVDKNPEGMRSREKYFWQSLIGLVAALYLAFSVSETSNLRVLELFIRWVQSGFSNDLPPKADLIVPFFKSISYPLGVFGFIFLTYVVIVGSSNAVNLTDGLDGLAIMPVVMVGSALGIFAYATGSSVYANYLLLPHIPGAGELMIFCAAMAGAGLAFLWFNAYPAQVFMGDVGALALGGALGTIAVIVRQEVVLAIMGGIFVLEALSVMAQVTWFKYTKRRYGAGRRILLMAPLHHHFEKSGWKETQVVVRFWIITMLLCLVGLSSLKLR.

10 helical membrane-spanning segments follow: residues 29–49, 75–95, 101–121, 138–158, 193–213, 226–246, 263–283, 290–310, 315–335, and 370–390; these read RAVM…PIVI, TPTM…LLWF, FVWI…VDDW, YFWQ…SVSE, SISY…VIVG, GLAI…AYAT, AGEL…FLWF, VFMG…IAVI, VVLA…MAQV, and QVVV…LSSL.

The protein belongs to the glycosyltransferase 4 family. MraY subfamily. Requires Mg(2+) as cofactor.

It localises to the cell inner membrane. The enzyme catalyses UDP-N-acetyl-alpha-D-muramoyl-L-alanyl-gamma-D-glutamyl-meso-2,6-diaminopimeloyl-D-alanyl-D-alanine + di-trans,octa-cis-undecaprenyl phosphate = di-trans,octa-cis-undecaprenyl diphospho-N-acetyl-alpha-D-muramoyl-L-alanyl-D-glutamyl-meso-2,6-diaminopimeloyl-D-alanyl-D-alanine + UMP. It participates in cell wall biogenesis; peptidoglycan biosynthesis. Functionally, catalyzes the initial step of the lipid cycle reactions in the biosynthesis of the cell wall peptidoglycan: transfers peptidoglycan precursor phospho-MurNAc-pentapeptide from UDP-MurNAc-pentapeptide onto the lipid carrier undecaprenyl phosphate, yielding undecaprenyl-pyrophosphoryl-MurNAc-pentapeptide, known as lipid I. This Methylibium petroleiphilum (strain ATCC BAA-1232 / LMG 22953 / PM1) protein is Phospho-N-acetylmuramoyl-pentapeptide-transferase.